Reading from the N-terminus, the 279-residue chain is Probable endonuclease 4 (279 aa).

Zn(2+)-binding residues include His68, His108, Glu143, Asp177, His180, His214, Asp227, His229, and Glu259.

The protein belongs to the AP endonuclease 2 family. Requires Zn(2+) as cofactor.

It catalyses the reaction Endonucleolytic cleavage to 5'-phosphooligonucleotide end-products.. Functionally, endonuclease IV plays a role in DNA repair. It cleaves phosphodiester bonds at apurinic or apyrimidinic (AP) sites, generating a 3'-hydroxyl group and a 5'-terminal sugar phosphate. The polypeptide is Probable endonuclease 4 (Nitrosopumilus maritimus (strain SCM1)).